Reading from the N-terminus, the 201-residue chain is Adenylyl-sulfate kinase (201 aa).

35–42 is an ATP binding site; it reads GLSGSGKS. S109 serves as the catalytic Phosphoserine intermediate.

The protein belongs to the APS kinase family.

The enzyme catalyses adenosine 5'-phosphosulfate + ATP = 3'-phosphoadenylyl sulfate + ADP + H(+). The protein operates within sulfur metabolism; hydrogen sulfide biosynthesis; sulfite from sulfate: step 2/3. In terms of biological role, catalyzes the synthesis of activated sulfate. The polypeptide is Adenylyl-sulfate kinase (Enterobacter sp. (strain 638)).